We begin with the raw amino-acid sequence, 179 residues long: Transmembrane protein 196 (179 aa).

4 consecutive transmembrane segments (helical) span residues 11–31 (LLVL…VGAV), 44–61 (LGDS…ILCA), 67–87 (LVMI…ILNF), and 100–120 (LYPL…GCTL).

It is found in the cytoplasm. The protein localises to the membrane. Its function is as follows. Acts as a tumor suppressor in lung cancer. Inhibits tumor cell growth by inhibiting cell proliferation and migration and promoting cell apoptosis. Inhibits metastasis of lung cancer by suppressing beta-catenin expression in the Wnt/beta-catenin signaling pathway. This Pongo abelii (Sumatran orangutan) protein is Transmembrane protein 196 (TMEM196).